We begin with the raw amino-acid sequence, 873 residues long: MAAAAAEFRGQARLPRFAAPRRYELRLRPDLAACVFSGEASVAVDVSAPTRFLVLNAADLAVDRASIRFQGLAPAEVSVFEEDEILVLEFAGELPLGEGVLAMRFNGTLNDQMRGFYRSKYEYKGETKNMAVTQFESVDARRCFPCWDEPSFKAKFKLTLEVPSELVALSNMPIVNEKIAGPIKTVEYEESPVMSTYLVAIVVGLFDYIEGVTSEGNKVRVYTQVGKSNQGKFALDVGVKSLNLYKEFFDTPYPLPKLDMVAIPDFTNGAMENYGLVTYREIYLLFDEQSSSASTKQNVAITVAHELAHQWFGNLVTMEWWTHLWLNEGFATWMSYLAVDSFFPEWNIWTQFLDSTTSALKLDSLAESHPIEVEIHHASEIDSIFDSISYDKGASVIRMLQSYLGAERFQKALASYIKKYAYSNAKTEDLWAVLEEVSGEPVKNLMTTWTKKQGYPVIGVKLKGHDVELEQDQFLLDGSSDSGMWIVPITLGCNSHDMQKRFLLKHKFSDIKGINSQYDDQDRQNSGNFWIKLNIDETGFYRVKYDDELTTALRNALQMKKLSLMDKIGIVEDAHALSIAGKQTLSSLLHLLYACRDEDDFSVLSHINSVTSSVAKISIDATPELAGEIKQLFIKLLLPTAEKLGWDPKNSESHLDAMLRPVLLVGLVQLGHDKTISEGVRRFQIFFDDRNTSLPPDTRKAAYLSVMHNVSSTNRSGYDALLKIYRESTEVEERLNVLGILSSCQDKDIVLESLNFIFTDEVRNQDAYLVLRSVIIDARETAWSWLKENWDRITKTFAASAILSDYVKSIVTLFTSKEKEAEISQFFATRTKPGFKRALKQSLENVRISARWVDGIRGEAELAQTVHDLLIKL.

Positions leucine 96 to valine 203 are required for membrane association. Residues glutamate 136 and glycine 269–asparagine 273 each bind substrate. Histidine 305 is a Zn(2+) binding site. Glutamate 306 (proton acceptor) is an active-site residue. Zn(2+)-binding residues include histidine 309 and glutamate 328. Residues leucine 721–leucine 722 carry the Dileucine internalization motif motif.

It belongs to the peptidase M1 family. As to quaternary structure, homodimer. Zn(2+) is required as a cofactor.

It localises to the membrane. Its subcellular location is the microsome membrane. The protein localises to the cytoplasm. The enzyme catalyses Release of an N-terminal amino acid, Xaa-|-Yaa- from a peptide, amide or arylamide. Xaa is preferably Ala, but may be most amino acids including Pro (slow action). When a terminal hydrophobic residue is followed by a prolyl residue, the two may be released as an intact Xaa-Pro dipeptide.. The protein is Aminopeptidase M1-D of Oryza sativa subsp. japonica (Rice).